A 351-amino-acid chain; its full sequence is MSKFWSPFVKDLVPYVPGEQPKLSRLVKLNTNENPYGPSPQALAAMQAELNDDLRLYPDPNGERLKQAVAAHYGVQANQVFVGNGSDEVLAHIFHGLFQHDLPLLFPDVTYSFYPVYCGLYGIAHEKIALDERFRIRVEDYARPNGGIIFPNPNAPTGCLLPLDAIEAMLKASPDSVVVVDEAYVDFGGESAIALVDRYPNLLVTQTLSKSRSLAGLRVGLAVGHADLVEALERIKNSFNSYPLDRLAIAGAAAAFEDDAYFRRTCQAVIDSREALSASLQALGFEVLPSAANFVFARHPRHDAGQIASTLREQGVIVRHFKQARIDQFLRITIGSPEQNQALLDALHFLK.

Lys-210 is subject to N6-(pyridoxal phosphate)lysine.

The protein belongs to the class-II pyridoxal-phosphate-dependent aminotransferase family. Histidinol-phosphate aminotransferase subfamily. As to quaternary structure, homodimer. Pyridoxal 5'-phosphate is required as a cofactor.

The enzyme catalyses L-histidinol phosphate + 2-oxoglutarate = 3-(imidazol-4-yl)-2-oxopropyl phosphate + L-glutamate. The protein operates within amino-acid biosynthesis; L-histidine biosynthesis; L-histidine from 5-phospho-alpha-D-ribose 1-diphosphate: step 7/9. This is Histidinol-phosphate aminotransferase 1 (hisC1) from Pseudomonas aeruginosa (strain ATCC 15692 / DSM 22644 / CIP 104116 / JCM 14847 / LMG 12228 / 1C / PRS 101 / PAO1).